A 140-amino-acid polypeptide reads, in one-letter code: ATP synthase epsilon chain (140 aa).

It belongs to the ATPase epsilon chain family. F-type ATPases have 2 components, CF(1) - the catalytic core - and CF(0) - the membrane proton channel. CF(1) has five subunits: alpha(3), beta(3), gamma(1), delta(1), epsilon(1). CF(0) has three main subunits: a, b and c.

The protein resides in the cell inner membrane. Produces ATP from ADP in the presence of a proton gradient across the membrane. This Xanthomonas oryzae pv. oryzae (strain MAFF 311018) protein is ATP synthase epsilon chain.